The following is a 542-amino-acid chain: Homeobox and leucine zipper protein Homez (542 aa).

The segment at residues 55–114 (WTQAIQTSELDGNEHLLQAFSYFPYPSLADIALLCLRHGLQMEKVKTWFMAQRLRCGISW) is a DNA-binding region (homeobox 1). The segment at 165 to 193 (LSPLAPSEQPTHMKGLKVEPEEPSQVSQL) is disordered. Residues Lys181 and Lys201 each participate in a glycyl lysine isopeptide (Lys-Gly) (interchain with G-Cter in SUMO2) cross-link. Positions 250-307 (VHQPDKPASVSLLDNSCKEESEPSGIPPSSSTSSPSFQALANGTTATPKPLQPLGCIS) are disordered. The span at 272–285 (PSGIPPSSSTSSPS) shows a compositional bias: low complexity. Residues 286–296 (FQALANGTTAT) show a composition bias toward polar residues. At Ser345 the chain carries Phosphoserine. 2 consecutive DNA-binding regions (homeobox) follow at residues 349-409 (QHQR…KHGQ) and 443-502 (TPPL…AEVV). A Nuclear localization signal motif is present at residues 352–357 (RKTKRK). Disordered stretches follow at residues 424-454 (FQDPAIPTPSTRSLKEWAKTPPLPAPPPPPD) and 501-542 (VVVC…IIWD). Position 443 is a phosphothreonine (Thr443). Residues 444-454 (PPLPAPPPPPD) are compositionally biased toward pro residues. Residues 505–542 (LDEEDEEDEEDELPEDGEEEEEEEEDDDDGDDDVIIWD) show a composition bias toward acidic residues.

In terms of assembly, homodimer or heterodimer (Potential). Interacts with HOXC8. As to expression, ubiquitous. Strongly expressed in testis.

It is found in the nucleus. May function as a transcriptional regulator. The polypeptide is Homeobox and leucine zipper protein Homez (Homez) (Mus musculus (Mouse)).